Here is a 156-residue protein sequence, read N- to C-terminus: Ribosomal RNA large subunit methyltransferase H (156 aa).

S-adenosyl-L-methionine-binding positions include L73, G104, and 123 to 128 (LSPLTL).

Belongs to the RNA methyltransferase RlmH family. As to quaternary structure, homodimer.

The protein resides in the cytoplasm. The catalysed reaction is pseudouridine(1915) in 23S rRNA + S-adenosyl-L-methionine = N(3)-methylpseudouridine(1915) in 23S rRNA + S-adenosyl-L-homocysteine + H(+). Functionally, specifically methylates the pseudouridine at position 1915 (m3Psi1915) in 23S rRNA. The sequence is that of Ribosomal RNA large subunit methyltransferase H from Aliivibrio fischeri (strain MJ11) (Vibrio fischeri).